The chain runs to 92 residues: MSVLTVPRQTPRQRLPVLPCHVGDPDLWFADTPAGLEVAKTLCVSCPIRRQCLAAALQRAEPWGVWGGEIFDQGSIVSHKRPRGRPRKDAVA.

The 58-residue stretch at 19–76 (PCHVGDPDLWFADTPAGLEVAKTLCVSCPIRRQCLAAALQRAEPWGVWGGEIFDQGSI) folds into the 4Fe-4S Wbl-type domain. Cysteine 20, cysteine 43, cysteine 46, and cysteine 52 together coordinate [4Fe-4S] cluster. The a.T hook DNA-binding region spans 80–91 (KRPRGRPRKDAV).

It belongs to the WhiB family. [4Fe-4S] cluster serves as cofactor. Post-translationally, the Fe-S cluster can be nitrosylated by nitric oxide (NO). Upon Fe-S cluster removal intramolecular disulfide bonds are formed.

It is found in the cytoplasm. Functionally, the apo- but not holo-form probably binds DNA. Acts as a transcriptional regulator. Probably redox-responsive. Upon overproduction at least 10 other genes are up-regulated, among them are Rv1258c, Rv1988, Rv2301, Rv2416c, Rv2725c and whiB7 itself. Probably redox-responsive. The apo-form has been shown to act as a protein disulfide reductase. The protein is Probable transcriptional regulator WhiB7 (whiB7) of Mycobacterium tuberculosis (strain ATCC 25618 / H37Rv).